The primary structure comprises 325 residues: Protein VP6-B (325 aa).

Disordered regions lie at residues 23–123 (INLI…TIGA) and 176–229 (VAEQ…EEQA). 2 stretches are compositionally biased toward basic and acidic residues: residues 32 to 52 (ESGK…ESKD) and 61 to 79 (SQKK…DRRI). Over residues 106–123 (KVGGGGGNADAGVGTIGA) the composition is skewed to gly residues. Basic and acidic residues-rich tracts occupy residues 176-201 (VAEQ…AAER) and 210-226 (PHGD…KTSE).

Belongs to the orbivirus VP6 family.

The protein resides in the virion. Functionally, surrounds and interacts with the genomic dsRNA. Possesses ss- and dsRNA-binding capacity. Its hydrophilic nature and capability to bind ss- and dsRNA suggest that it interacts with BTV genomic RNA. In Bluetongue virus 10 (isolate USA) (BTV 10), this protein is Protein VP6-B (Segment-9).